Consider the following 364-residue polypeptide: PqqA peptide cyclase (364 aa).

Residues 6–222 enclose the Radical SAM core domain; the sequence is VGAPAGMLIE…HARTRYAGGP (217 aa). Residues C20, C24, and C27 each contribute to the [4Fe-4S] cluster site.

It belongs to the radical SAM superfamily. PqqE family. Interacts with PqqD. The interaction is necessary for activity of PqqE. Requires [4Fe-4S] cluster as cofactor.

The enzyme catalyses [PQQ precursor protein] + S-adenosyl-L-methionine = E-Y cross-linked-[PQQ precursor protein] + 5'-deoxyadenosine + L-methionine + H(+). The protein operates within cofactor biosynthesis; pyrroloquinoline quinone biosynthesis. Functionally, catalyzes the cross-linking of a glutamate residue and a tyrosine residue in the PqqA protein as part of the biosynthesis of pyrroloquinoline quinone (PQQ). This chain is PqqA peptide cyclase, found in Streptomyces rochei (Streptomyces parvullus).